The chain runs to 255 residues: Ribose-5-phosphate isomerase (255 aa).

It belongs to the ribose 5-phosphate isomerase family.

It localises to the cytoplasm. It catalyses the reaction aldehydo-D-ribose 5-phosphate = D-ribulose 5-phosphate. The protein operates within carbohydrate degradation; pentose phosphate pathway; D-ribose 5-phosphate from D-ribulose 5-phosphate (non-oxidative stage): step 1/1. This chain is Ribose-5-phosphate isomerase (RKI1), found in Eremothecium gossypii (strain ATCC 10895 / CBS 109.51 / FGSC 9923 / NRRL Y-1056) (Yeast).